Here is a 366-residue protein sequence, read N- to C-terminus: MSGSNDLRIAVLGVGMMGADHVARITERIKGATVAVVNDYFIEKAEQIAAGIPGCRVIGDPLDAIADPDVDAVVLATPGPTHEKQLLACLEHGKPVMCEKPLTTDVATSLEIVKREAELGKKLIQVGFMRRFDHEYEQLKTLIDDGTFGQVLLAHCVHRNPAVPPSFDSSMIVKDSLVHEVDVTRFLFDEEITSVHILRPAANPGAPEGLQDPQIALFSTESGRHVDVEVFVTTGVAYEVRTEIVAEKGSAFIGLDVGLVRKFGTGAGNGRSGAGMSGGEITPSFKERFGQAYDVEIQRWVNAARTGAETGNYIDGPGAWDGYAAAAVCAAGVQSLETGERVAVDMVDRSSIPGAEPAERPIGPGA.

The protein belongs to the Gfo/Idh/MocA family. As to quaternary structure, homotetramer.

It carries out the reaction myo-inositol + NAD(+) = scyllo-inosose + NADH + H(+). Functionally, involved in the oxidation of myo-inositol (MI) to 2-keto-myo-inositol (2KMI or 2-inosose). This is Inositol 2-dehydrogenase from Rhodococcus jostii (strain RHA1).